The following is a 504-amino-acid chain: MSLICSISNEVPEHPCVSPVSNHVYERRLIEKYIAENGTDPINNQPLSEEQLIDIKVAHPIRPKPPSATSIPAILKALQDEWDAVMLHSFTLRQQLQTTRQELSHALYQHDAACRVIARLTKEVTAAREALATLKPQAGLIVPQAVPSSQPSVVGAGEPMDLGELVGMTPEIIQKLQDKATVLTTERKKRGKTVPEELVKPEELSKYRQVASHVGLHSASIPGILALDLCPSDTNKILTGGADKNVVVFDKSSEQILATLKGHTKKVTSVVFHPSQDLVFSASPDATIRIWSVPNASCVQVVRAHESAVTGLSLHATGDYLLSSSDDQYWAFSDIQTGRVLTKVTDETSGCSLTCAQFHPDGLIFGTGTMDSQIKIWDLKERTNVANFPGHSGPITSIAFSENGYYLATAADDSSVKLWDLRKLKNFKTLQLDNNFEVKSLIFDQSGTYLALGGTDVQIYICKQWTEILHFTEHSGLTTGVAFGHHAKFIASTGMDRSLKFYSL.

An N-acetylserine modification is found at S2. One can recognise a U-box domain in the interval 2-73 (SLICSISNEV…KPPSATSIPA (72 aa)). Residues 68-223 (ATSIPAILKA…VGLHSASIPG (156 aa)) form a may mediate interaction with PSMC5 region. K122, K179, K244, and K261 each carry N6-acetyllysine. A WD 1 repeat occupies 219–259 (ASIPGILALDLCPSDTNKILTGGADKNVVVFDKSSEQILAT). WD repeat units follow at residues 262 to 301 (GHTKKVTSVVFHPSQDLVFSASPDATIRIWSVPNASCVQV), 304 to 345 (AHES…TKVT), 348 to 387 (TSGCSLTCAQFHPDGLIFGTGTMDSQIKIWDLKERTNVAN), 390 to 429 (GHSGPITSIAFSENGYYLATAADDSSVKLWDLRKLKNFKT), 433 to 472 (DNNFEVKSLIFDQSGTYLALGGTDVQIYICKQWTEILHFT), and 473 to 503 (EHSGLTTGVAFGHHAKFIASTGMDRSLKFYS).

It belongs to the WD repeat PRP19 family. In terms of assembly, homotetramer. Component of activated, catalytic and post-catalytic spliceosomes. Component of the Prp19 complex/PRP19C/Nineteen complex/NTC and related complexes described as PRP19-CDC5L splicing complex and PSO4 complex. A homotetramer of PRPF19, CDC5L, PLRG1 and BCAS2 constitute the core of those complexes. The interaction with CDC5L, PLRG1 and BCAS2 is direct within this core complex. At least three less stably associated proteins CTNNBL1, CWC15 and HSPA8 are found in the Prp19 complex. The Prp19 complex associates with the spliceosome during its assembly and remodeling recruiting additional proteins. Component of the XAB2 complex, a multimeric protein complex composed of XAB2, PRPF19, AQR, ZNF830, ISY1, and PPIE. Interacts with CWC22 and EIF4A3 in an RNA-independent manner. Interacts with RPA1 and RPA2; the PRP19-CDC5L complex is recruited to the sites of DNA repair where it interacts with the replication protein A complex (RPA). Interacts with SETMAR; required for SETMAR recruitment to site of DNA damage. Interacts with U2AF2; the interaction is direct and recruits the Prp19 complex to RNA polymerase II C-terminal domain (CTD) and the pre-mRNA. Interacts with PRPF3. Interacts with APEX1, DNTT and PSMB4. Interacts with PSMC5. Interacts with KNSTRN. Interacts (via N-terminus) with CDC5L. Interacts with KHDC4. Interacts with USB1. Interacts with DDX41. Ubiquitous. Weakly expressed in senescent cells of different tissue origins. Highly expressed in tumor cell lines.

It localises to the nucleus. The protein localises to the nucleoplasm. It is found in the cytoplasm. Its subcellular location is the cytoskeleton. The protein resides in the spindle. It localises to the lipid droplet. It carries out the reaction S-ubiquitinyl-[E2 ubiquitin-conjugating enzyme]-L-cysteine + [acceptor protein]-L-lysine = [E2 ubiquitin-conjugating enzyme]-L-cysteine + N(6)-ubiquitinyl-[acceptor protein]-L-lysine.. Its pathway is protein modification; protein ubiquitination. In terms of biological role, ubiquitin-protein ligase which is a core component of several complexes mainly involved pre-mRNA splicing and DNA repair. Required for pre-mRNA splicing as component of the spliceosome. Core component of the PRP19C/Prp19 complex/NTC/Nineteen complex which is part of the spliceosome and participates in its assembly, its remodeling and is required for its activity. During assembly of the spliceosome, mediates 'Lys-63'-linked polyubiquitination of the U4 spliceosomal protein PRPF3. Ubiquitination of PRPF3 allows its recognition by the U5 component PRPF8 and stabilizes the U4/U5/U6 tri-snRNP spliceosomal complex. Recruited to RNA polymerase II C-terminal domain (CTD) and the pre-mRNA, it may also couple the transcriptional and spliceosomal machineries. The XAB2 complex, which contains PRPF19, is also involved in pre-mRNA splicing, transcription and transcription-coupled repair. Beside its role in pre-mRNA splicing PRPF19, as part of the PRP19-CDC5L complex, plays a role in the DNA damage response/DDR. It is recruited to the sites of DNA damage by the RPA complex where PRPF19 directly ubiquitinates RPA1 and RPA2. 'Lys-63'-linked polyubiquitination of the RPA complex allows the recruitment of the ATR-ATRIP complex and the activation of ATR, a master regulator of the DNA damage response. May also play a role in DNA double-strand break (DSB) repair by recruiting the repair factor SETMAR to altered DNA. As part of the PSO4 complex may also be involved in the DNA interstrand cross-links/ICLs repair process. In addition, may also mediate 'Lys-48'-linked polyubiquitination of substrates and play a role in proteasomal degradation. May play a role in the biogenesis of lipid droplets. May play a role in neural differentiation possibly through its function as part of the spliceosome. The protein is Pre-mRNA-processing factor 19 of Homo sapiens (Human).